Reading from the N-terminus, the 1710-residue chain is MASLSQSESGRLYSWWWDSHIPKNSKWIQDNLADMDSKVKTMIKLIEADADSFARRADMYFKKRPELMKLVEELYRAYRALAERYDHTTVELRRAHKVMVEAFPNQMSFDMIEDSASSSSEPRTEADTEALQKDGTKSKRSFSQMNKLDGTSDSHEADSEVETLKRTLLELQTEKEALNLQYQLILSKVSRFEKELNDAQKDVKGFDERACKADIEIKILKESLAKLEVERDTGLLQYSQAIERIADLEASISHGQEYAKGLTNRVSEAEREAMSLKKELSRLQSEKEAGLLRYNKSLELISSLEKTIRDAEESVRVFRDQSEQAETEIKALKQELLKLNEVNEDLNVRYQQCLETISKLEREVSHAQDNAKRLSSEVLAGAAKIKTVEEQCALLESFNQTMKVEAENLAHKMSAKDQELSQKQNEIEKLQAVMQEEQLRFSELGASLRNLESLHSQSQEEQKVLTSELHSRIQMLRELEMRNSKLEGDISSKEENRNLSEINDTSISLEIQKNEISCLKKMKEKLEEEVAKQMNQSSALQVEIHCVKGNIDSMNRRYQKLIDQVSLTGFDPESLSYSVKKLQDENSKLVELCTNQRDENNAVTGKLCEMDSILKRNADLEKLLLESNTKLDGSREKAKDLIERCESLRGEKSELAAERANLVSQLQIMTANMQTLLEKNSVLEKSLSCANIELESLRDKSKCFDDFFQFLKNDKSELMKERESLVSQLCKVEEKLGVLEKKYTELEVRYTDLQRDNKLKSHQVEELQVSLAAEKQESANYKRSTESRLADLQKNVSFLREECRSRKREYEDELDRVVNKQVEIFILQKLIEDLEQKNFSLLIECQKHVEASEFSEKLIAELESENLEQQMEAEIFLDEIDSLRGAIYQVIKALQVEADCKTEQKITKDQISVSRALGEIDSLKGSLSSAEYEMHRLVVENSVLLSLLGQFQSDGLVLESEKNILEKDLKTKIHQCGMLEKDKQDLQEANRLLKSKLIKREQQEQKLRAELKFENLKFESLHDSYMVLQQDYSYTLNDNKTLLLKFSEFKDGMHVVEEENDAILQEAVALSNTCVVYRSFGSEMAEEVEDFVETVSSLREISTGLKRKVETLEKKLEGKEKESQGLNKMLENLQEGLEEDNFLTGLLEHQVSNVDEILEHREMEILEAEHMLKATNNENEELHKEVEELRKDYEDSRRMRANLEWQISELSDVAGRQEEEIRKLNALNENLESEVQFLNKEIQRQQVREEYLSLELQEKSNEIGLWDSAATSFYFDLQVSAIRELILENKVNELSGVCENLNDEVVTKTTKIKQMKETVGFLESQVTELKSQLSAYDPVIASLAGDVKALEKSTHALTKFPATAYQQRVGNNLEESGSTTSPCNGIVILKEINPSIKTIEQAFVKEKGRLSRQITRSTSQKRRDRRKIENIQPDDQVTGESRQPRLRPEMTEVKNELLMKDNPRDQVTDSLTYGRSQGTSHGSNDMFEFWDESAESETSVNFLINSNKPQRSLNSNLRHQSRNPSIESDKAVGVVDKLELSRNIEDKAKILERLLSDSRRLSSLRISLTDLKRKLEMNEKQRRFSNADLVIVKRQLKEMEEAVSQLENTNEILSKEIEETGDARDIYRKVVVEKSRSGSEKIEQLQNKMQNIEQTVLKLEDGTKSKGRKMFSETRTVILLRDIIHKGGKRSARKKKNRFCGCIRSSTKEE.

An NAB domain is found at 13–92 (YSWWWDSHIP…ERYDHTTVEL (80 aa)). The segment at 113–159 (EDSASSSSEPRTEADTEALQKDGTKSKRSFSQMNKLDGTSDSHEADS) is disordered. 2 stretches are compositionally biased toward basic and acidic residues: residues 122–137 (PRTE…DGTK) and 150–159 (GTSDSHEADS). Coiled coils occupy residues 152–446 (SDSH…ELGA), 474–546 (QMLR…EIHC), 579–883 (VKKL…IDSL), 974–1021 (HQCG…FESL), 1095–1259 (VSSL…LQEK), and 1285–1336 (LILE…LSAY). Residues 1409–1448 (RLSRQITRSTSQKRRDRRKIENIQPDDQVTGESRQPRLRP) form a disordered region. A coiled-coil region spans residues 1559–1665 (RRLSSLRISL…VLKLEDGTKS (107 aa)).

The protein belongs to the NET family. As to expression, expressed in root meristems and at very low levels throughout mature vasculature.

In terms of biological role, plant-specific actin binding protein. May be part of a membrane-cytoskeletal adapter complex. In Arabidopsis thaliana (Mouse-ear cress), this protein is Protein NETWORKED 1B.